The following is a 448-amino-acid chain: Protein odr-4 homolog (448 aa).

Helical transmembrane passes span 76-96 (ASQLGRMLPGGLMVLGVFLMT) and 428-448 (GLLISTVVASIAVIISFYYII).

Belongs to the ODR-4 family.

Its subcellular location is the membrane. Functionally, may play a role in the trafficking of a subset of G-protein coupled receptors. The protein is Protein odr-4 homolog (odr4) of Xenopus tropicalis (Western clawed frog).